A 368-amino-acid chain; its full sequence is Flagellar P-ring protein (368 aa).

The signal sequence occupies residues 1–22; sequence MLIPLARAVLALALLGAGAAHA.

This sequence belongs to the FlgI family. The basal body constitutes a major portion of the flagellar organelle and consists of four rings (L,P,S, and M) mounted on a central rod.

It localises to the periplasm. The protein localises to the bacterial flagellum basal body. Functionally, assembles around the rod to form the L-ring and probably protects the motor/basal body from shearing forces during rotation. This is Flagellar P-ring protein from Bordetella bronchiseptica (strain ATCC BAA-588 / NCTC 13252 / RB50) (Alcaligenes bronchisepticus).